A 503-amino-acid polypeptide reads, in one-letter code: Endoglycoceramidase (503 aa).

Positions 1-21 (MAETQPLVFVLMSISAILTAG) are cleaved as a signal peptide. N-linked (GlcNAc...) asparagine glycosylation is found at asparagine 72, asparagine 108, and asparagine 205. Glutamate 239 serves as the catalytic Proton donor. N-linked (GlcNAc...) asparagine glycans are attached at residues asparagine 307, asparagine 409, and asparagine 485.

This sequence belongs to the glycosyl hydrolase 5 (cellulase A) family.

The protein resides in the secreted. It localises to the nematocyst. The catalysed reaction is an oligoglycosyl-(1-&gt;4)-beta-D-glucosyl-(1&lt;-&gt;1)-ceramide + H2O = an oligoglycosyl-(1-&gt;4)-D-glucose + an N-acyl-sphingoid base. Its activity is regulated as follows. Completely inhibited by Hg(2+). Cu(2+) and zinc have no effect on enzyme activity. Lithium, potassium, manganese, Ni(2+), calcium, magnesium and EDTA have no significant effect on enzyme activity. Enzyme requires presence of detergents such as Triton X-100 and Lubrol PX for the hydrolysis of glycosphingolipids. Taurodeoxycholate strongly inhibits the enzyme activity and SDS completely inhibits the enzyme activity. Its function is as follows. Hydrolysis of the glycosidic linkage between oligosaccharides and ceramides of glycosphingolipids, especially b-series polysialogangliosides. The polypeptide is Endoglycoceramidase (Cyanea nozakii (Jellyfish)).